Reading from the N-terminus, the 216-residue chain is Probable nicotinate-nucleotide adenylyltransferase (216 aa).

The protein belongs to the NadD family.

It catalyses the reaction nicotinate beta-D-ribonucleotide + ATP + H(+) = deamido-NAD(+) + diphosphate. It participates in cofactor biosynthesis; NAD(+) biosynthesis; deamido-NAD(+) from nicotinate D-ribonucleotide: step 1/1. Catalyzes the reversible adenylation of nicotinate mononucleotide (NaMN) to nicotinic acid adenine dinucleotide (NaAD). This Shewanella pealeana (strain ATCC 700345 / ANG-SQ1) protein is Probable nicotinate-nucleotide adenylyltransferase.